We begin with the raw amino-acid sequence, 348 residues long: 2-heptyl-4(1H)-quinolone synthase subunit PqsC (348 aa).

Residue Cys-129 is the Acyl-thioester intermediate of the active site. His-269 is an active-site residue.

Belongs to the thiolase-like superfamily. FabH family. As to quaternary structure, forms a tight complex with PqsB.

It localises to the cytoplasm. It catalyses the reaction (2-aminobenzoyl)acetate + octanoyl-CoA + H(+) = 2-heptyl-4(1H)-quinolone + CO2 + CoA + H2O. Its activity is regulated as follows. Folding of PqsC and binding of octanoate are promoted by PqsB. Binding of the octanoyl group probably increases the binding affinity of the complex for 2-ABA. Activity of the complex is inhibited by 2-aminoacetophenone (2-AA). Its function is as follows. Required for the biosynthesis of the quorum-sensing signaling molecules 2-heptyl-4(1H)-quinolone (HHQ) and 2-heptyl-3-hydroxy-4(1H)-quinolone (Pseudomonas quinolone signal or PQS), which are important for biofilm formation and virulence. The PqsC/PqsB complex catalyzes the condensation of 2-aminobenzoylacetate (2-ABA) and octanoyl-CoA to form HHQ. First, PqsC acquires an octanoyl group from octanoyl-CoA and forms an octanoyl-PqsC intermediate. Then, together with PqsB, it catalyzes the coupling of 2-ABA with the octanoate group, leading to decarboxylation and dehydration, and resulting in closure of the quinoline ring. The chain is 2-heptyl-4(1H)-quinolone synthase subunit PqsC from Pseudomonas aeruginosa (strain ATCC 15692 / DSM 22644 / CIP 104116 / JCM 14847 / LMG 12228 / 1C / PRS 101 / PAO1).